Here is a 312-residue protein sequence, read N- to C-terminus: HPr kinase/phosphorylase (312 aa).

Active-site residues include histidine 139 and lysine 160. 154–161 (GSSGVGKS) contributes to the ATP binding site. Serine 161 provides a ligand contact to Mg(2+). Residue aspartate 178 is the Proton acceptor; for phosphorylation activity. Proton donor; for dephosphorylation activity of the active site. The important for the catalytic mechanism of both phosphorylation and dephosphorylation stretch occupies residues 202–211 (LEIRGLGIIN). Glutamate 203 contributes to the Mg(2+) binding site. Arginine 244 is a catalytic residue. The important for the catalytic mechanism of dephosphorylation stretch occupies residues 265–270 (PVRPGR).

This sequence belongs to the HPrK/P family. Homohexamer. It depends on Mg(2+) as a cofactor.

It carries out the reaction [HPr protein]-L-serine + ATP = [HPr protein]-O-phospho-L-serine + ADP + H(+). It catalyses the reaction [HPr protein]-O-phospho-L-serine + phosphate + H(+) = [HPr protein]-L-serine + diphosphate. Its function is as follows. Catalyzes the ATP- as well as the pyrophosphate-dependent phosphorylation of a specific serine residue in HPr, a phosphocarrier protein of the phosphoenolpyruvate-dependent sugar phosphotransferase system (PTS). HprK/P also catalyzes the pyrophosphate-producing, inorganic phosphate-dependent dephosphorylation (phosphorolysis) of seryl-phosphorylated HPr (P-Ser-HPr). The two antagonistic activities of HprK/P are regulated by several intracellular metabolites, which change their concentration in response to the absence or presence of rapidly metabolisable carbon sources (glucose, fructose, etc.) in the growth medium. Therefore, by controlling the phosphorylation state of HPr, HPrK/P is a sensor enzyme that plays a major role in the regulation of carbon metabolism and sugar transport: it mediates carbon catabolite repression (CCR), and regulates PTS-catalyzed carbohydrate uptake and inducer exclusion. The protein is HPr kinase/phosphorylase of Listeria innocua serovar 6a (strain ATCC BAA-680 / CLIP 11262).